The following is a 603-amino-acid chain: Elongation factor 4 (603 aa).

A tr-type G domain is found at 7 to 189 (SRIRNFSIIA…SIVHLVPPPE (183 aa)). GTP contacts are provided by residues 19–24 (DHGKST) and 136–139 (NKID).

Belongs to the TRAFAC class translation factor GTPase superfamily. Classic translation factor GTPase family. LepA subfamily.

The protein localises to the cell inner membrane. The enzyme catalyses GTP + H2O = GDP + phosphate + H(+). Functionally, required for accurate and efficient protein synthesis under certain stress conditions. May act as a fidelity factor of the translation reaction, by catalyzing a one-codon backward translocation of tRNAs on improperly translocated ribosomes. Back-translocation proceeds from a post-translocation (POST) complex to a pre-translocation (PRE) complex, thus giving elongation factor G a second chance to translocate the tRNAs correctly. Binds to ribosomes in a GTP-dependent manner. The sequence is that of Elongation factor 4 from Acaryochloris marina (strain MBIC 11017).